The sequence spans 439 residues: Lactamase-like protein nscB (439 aa).

Residues H214, H216, D218, and H219 each contribute to the Zn(2+) site. D218 acts as the Proton donor/acceptor in catalysis.

This sequence belongs to the metallo-beta-lactamase superfamily. Zn(2+) is required as a cofactor.

It functions in the pathway secondary metabolite biosynthesis. Its function is as follows. Lactamase-like protein; part of the gene cluster that mediates the biosynthesis of neosartoricin B, a prenylated anthracenone that probably exhibits T-cell antiproliferative activity, suggestive of a physiological role as an immunosuppressive agent. The non-reducing polyketide synthase nscA probably synthesizes and cyclizes the decaketide backbone. The hydrolase nscB then mediates the product release through hydrolysis followed by spontaneous decarboxylation. The prenyltransferase nscD catalyzes the addition of the dimethylallyl group to the aromatic C5. The FAD-dependent monooxygenase nscC is then responsible for the stereospecific hydroxylation at C2. Neosartoricin B can be converted into two additional compounds neosartoricins C and D. Neosartoricin C is a spirocyclic compound that is cyclized through the attack of C3 hydroxyl on C14, followed by dehydration. On the other hand, neosartoricin D is a further cyclized compound in which attack of C2 on C14 in neosartoricin C results in the formation of the acetal-containing dioxabicyclo-octanone ring. Both of these compounds are novel and possibly represent related metabolites of the gene cluster. This chain is Lactamase-like protein nscB, found in Arthroderma benhamiae (strain ATCC MYA-4681 / CBS 112371) (Trichophyton mentagrophytes).